The sequence spans 906 residues: Alanine--tRNA ligase, chloroplastic/mitochondrial (906 aa).

The segment covering 1–10 has biased composition (basic and acidic residues); that stretch reads MSAATERERL. The disordered stretch occupies residues 1–22; it reads MSAATERERLTNANPNARGKDN. Residues His589, His593, Cys691, and His695 each coordinate Zn(2+).

This sequence belongs to the class-II aminoacyl-tRNA synthetase family. Monomer. The cofactor is Zn(2+).

It localises to the plastid. The protein resides in the chloroplast. Its subcellular location is the mitochondrion. It carries out the reaction tRNA(Ala) + L-alanine + ATP = L-alanyl-tRNA(Ala) + AMP + diphosphate. In terms of biological role, catalyzes the attachment of alanine to tRNA(Ala) in a two-step reaction: alanine is first activated by ATP to form Ala-AMP and then transferred to the acceptor end of tRNA(Ala). Also edits incorrectly charged tRNA(Ala) via its editing domain. This chain is Alanine--tRNA ligase, chloroplastic/mitochondrial, found in Ostreococcus lucimarinus (strain CCE9901).